A 504-amino-acid polypeptide reads, in one-letter code: Probable alpha-L-arabinofuranosidase C (504 aa).

Asn-152, Asn-181, and Asn-269 each carry an N-linked (GlcNAc...) asparagine glycan.

It belongs to the glycosyl hydrolase 51 family.

It is found in the secreted. It catalyses the reaction Hydrolysis of terminal non-reducing alpha-L-arabinofuranoside residues in alpha-L-arabinosides.. It functions in the pathway glycan metabolism; L-arabinan degradation. Alpha-L-arabinofuranosidase involved in the degradation of arabinoxylan, a major component of plant hemicellulose. Acts only on small linear 1,5-alpha-linked L-arabinofuranosyl oligosaccharides. This chain is Probable alpha-L-arabinofuranosidase C (abfC), found in Aspergillus flavus (strain ATCC 200026 / FGSC A1120 / IAM 13836 / NRRL 3357 / JCM 12722 / SRRC 167).